Here is a 513-residue protein sequence, read N- to C-terminus: Voltage-gated potassium channel regulatory subunit KCNG1 (513 aa).

The Cytoplasmic segment spans residues 1–224 (MTLLPGDNSD…DMVERPHSGL (224 aa)). The interval 184-204 (EEDDALDSEGRDSEGPAEGEG) is disordered. Residues 191 to 204 (SEGRDSEGPAEGEG) show a composition bias toward basic and acidic residues. The chain crosses the membrane as a helical span at residues 225–246 (PGKVFACLSVLFVTVTAVNLSV). Residues 247–267 (STLPSLREEEEQGHCSQMCHN) lie on the Extracellular side of the membrane. Residues 268 to 289 (VFIVESVCVGWFSLEFLLRLIQ) traverse the membrane as a helical segment. Residues 290-300 (APSKFAFLRSP) are Cytoplasmic-facing. Residues 301-321 (LTLIDLVAILPYYITLLVDGA) form a helical membrane-spanning segment. Topologically, residues 322–338 (AAGRRKPGAGNSYLDKV) are extracellular. A helical; Voltage-sensor transmembrane segment spans residues 339 to 359 (GLVLRVLRALRILYVMRLARH). Over 360–374 (SLGLQTLGLTARRCT) the chain is Cytoplasmic. A helical transmembrane segment spans residues 375–396 (REFGLLLLFLCVAIALFAPLLY). Residues 397 to 411 (VIENEMADSPEFTSI) are Extracellular-facing. The helical intramembrane region spans 412-423 (PACYWWAVITMT). Residues 424 to 429 (TVGYGD) carry the Selectivity filter motif. Residues 424-431 (TVGYGDMV) lie within the membrane without spanning it. Residues 432–438 (PRSTPGQ) are Extracellular-facing. The helical transmembrane segment at 439–467 (VVALSSILSGILLMAFPVTSIFHTFSRSY) threads the bilayer. Topologically, residues 468–513 (LELKQEQERVMFRRAQFLIKTKSQLSVSQDSDILFGSASSDTRDNN) are cytoplasmic.

The protein belongs to the potassium channel family. G (TC 1.A.1.2) subfamily. Kv6.1/KCNG1 sub-subfamily. In terms of assembly, heterotetramer with KCNB1. Heterotetramer with KCNB2. Expressed in brain and placenta, and at much lower levels in kidney and pancreas.

The protein localises to the cell membrane. In terms of biological role, regulatory alpha-subunit of the voltage-gated potassium (Kv) channel which, when coassembled with KCNB1 or KCNB2, can modulate their expression and their gating kinetics by acting on deactivation upon repolarization and inactivation during maintained depolarization. Potassium channel subunit that does not form functional channels by itself. This is Voltage-gated potassium channel regulatory subunit KCNG1 from Homo sapiens (Human).